The chain runs to 349 residues: Protein RecA (349 aa).

Residue 65-72 participates in ATP binding; sequence GPESSGKT.

Belongs to the RecA family.

It is found in the cytoplasm. In terms of biological role, can catalyze the hydrolysis of ATP in the presence of single-stranded DNA, the ATP-dependent uptake of single-stranded DNA by duplex DNA, and the ATP-dependent hybridization of homologous single-stranded DNAs. It interacts with LexA causing its activation and leading to its autocatalytic cleavage. This chain is Protein RecA, found in Azotobacter vinelandii.